The following is an 86-amino-acid chain: Large ribosomal subunit protein bL31B (86 aa).

The protein belongs to the bacterial ribosomal protein bL31 family. Type B subfamily. In terms of assembly, part of the 50S ribosomal subunit.

The chain is Large ribosomal subunit protein bL31B from Saccharopolyspora erythraea (strain ATCC 11635 / DSM 40517 / JCM 4748 / NBRC 13426 / NCIMB 8594 / NRRL 2338).